The following is a 939-amino-acid chain: Valine--tRNA ligase (939 aa).

Residues P45 to H55 carry the 'HIGH' region motif. Residues K549–S553 carry the 'KMSKS' region motif. K552 provides a ligand contact to ATP. Residues A876–A939 adopt a coiled-coil conformation.

The protein belongs to the class-I aminoacyl-tRNA synthetase family. ValS type 1 subfamily. Monomer.

The protein localises to the cytoplasm. It catalyses the reaction tRNA(Val) + L-valine + ATP = L-valyl-tRNA(Val) + AMP + diphosphate. In terms of biological role, catalyzes the attachment of valine to tRNA(Val). As ValRS can inadvertently accommodate and process structurally similar amino acids such as threonine, to avoid such errors, it has a 'posttransfer' editing activity that hydrolyzes mischarged Thr-tRNA(Val) in a tRNA-dependent manner. In Chromobacterium violaceum (strain ATCC 12472 / DSM 30191 / JCM 1249 / CCUG 213 / NBRC 12614 / NCIMB 9131 / NCTC 9757 / MK), this protein is Valine--tRNA ligase.